Reading from the N-terminus, the 84-residue chain is Large ribosomal subunit protein bL27 (84 aa).

The segment at 1–29 (MAHKKGGGSTKNGRDSNPKYLGIKASGGS) is disordered.

Belongs to the bacterial ribosomal protein bL27 family.

The chain is Large ribosomal subunit protein bL27 from Chlorobium phaeobacteroides (strain BS1).